The chain runs to 135 residues: Fluoride-specific ion channel FluC 1 (135 aa).

Helical transmembrane passes span 7-27 (LAVG…GLVL), 32-52 (GFPY…PFLM), 65-85 (LALA…SFSV), and 96-116 (WSAF…LSLL). Na(+)-binding residues include G75 and T78.

Belongs to the fluoride channel Fluc/FEX (TC 1.A.43) family.

The protein resides in the cell membrane. The enzyme catalyses fluoride(in) = fluoride(out). Its activity is regulated as follows. Na(+) is not transported, but it plays an essential structural role and its presence is essential for fluoride channel function. In terms of biological role, fluoride-specific ion channel. Important for reducing fluoride concentration in the cell, thus reducing its toxicity. The chain is Fluoride-specific ion channel FluC 1 from Latilactobacillus sakei subsp. sakei (strain 23K) (Lactobacillus sakei subsp. sakei).